A 902-amino-acid polypeptide reads, in one-letter code: Respiratory nitrate reductase alpha chain (902 aa).

[4Fe-4S] cluster is bound by residues His29, Cys33, and Cys37.

The protein belongs to the prokaryotic molybdopterin-containing oxidoreductase family. As to quaternary structure, heterotrimer composed of an alpha, a beta and a gamma chain. Alpha and beta are catalytic chains; gamma chains are involved in binding the enzyme complex to the cytoplasmic membrane. The cofactor is [4Fe-4S] cluster. Mo-bis(molybdopterin guanine dinucleotide) is required as a cofactor.

It localises to the cell membrane. The protein resides in the cytoplasm. The enzyme catalyses nitrate + a quinol = a quinone + nitrite + H2O. Inhibited by micromolar concentrations of azide. In terms of biological role, the nitrate reductase enzyme complex allows Bradyrhizobium sp. USDA 3045 to use nitrate as an electron acceptor during anaerobic growth. The alpha chain is the actual site of nitrate reduction. The protein is Respiratory nitrate reductase alpha chain (narG) of Bradyrhizobium sp.